The primary structure comprises 421 residues: E3 ubiquitin-protein ligase RMD5 (421 aa).

A CTLH domain is found at E176–E236. An RING-Gid-type zinc finger spans residues C361–C404.

This sequence belongs to the RMD5/GID2 family. In terms of assembly, identified in the GID/CTLH complex. In the absence of stress, the complex exists as an inactive anticipatory complex (GID(Ant)), composed of VID30/GID1, the E3 ubiquitin-ligase RMD5/GID2, VID28/GID5, GID8, and the RING-like subunit FYV10/GID9, awaiting a substrate receptor to form the active E3 ligase complex. When cells are shifted to glucose-containing medium, the substrate receptor VID24/GID4 is induced and becomes part of the complex, named GID(SR4). Additionally, GID7 transforms the GID(SR4) E3 ligase core into a higher-order supramolecular assembly (Chelator-GID(SR4)) specifically tailored for FBP1 ubiquitination. Under osmotic or heat stress, the substrate receptor GID10 is induced and becomes part of the complex, named GID(SR10). Within the GID complex, interacts directly with GID8, FYV10/GID9 and VID28/GID5.

The protein localises to the cytoplasm. It carries out the reaction S-ubiquitinyl-[E2 ubiquitin-conjugating enzyme]-L-cysteine + [acceptor protein]-L-lysine = [E2 ubiquitin-conjugating enzyme]-L-cysteine + N(6)-ubiquitinyl-[acceptor protein]-L-lysine.. The protein operates within protein modification; protein ubiquitination. Functionally, E3 ubiquitin-protein ligase component of the GID E3 ligase complex recruiting N termini and catalyzing ubiquitination of proteins targeted for degradation. GID E3 is regulated through assembly with interchangeable N-degron-binding substrate receptors induced by distinct environmental perturbations. Required for the adaptation to the presence of glucose in the growth medium; mediates in association with the substrate receptor VID24/GID4 the degradation of enzymes involved in gluconeogenesis when cells are shifted to glucose-containing medium. Required for proteasome-dependent catabolite degradation of fructose-1,6-bisphosphatase (FBP1), malate dehydrogenase (MDH2), and other gluconeogenic enzymes. The protein is E3 ubiquitin-protein ligase RMD5 of Saccharomyces cerevisiae (strain ATCC 204508 / S288c) (Baker's yeast).